Here is a 114-residue protein sequence, read N- to C-terminus: DNA polymerase epsilon subunit C (114 aa).

The segment at 91–114 is disordered; the sequence is PDAVAPATGEEEQPKRRGRKPAQE.

In terms of assembly, heterotetramer. Consists of four subunits: POL2, DPB2, DPB3 and DPB4.

Its subcellular location is the nucleus. Functionally, as accessory component of the DNA polymerase epsilon (DNA polymerase II) participates in chromosomal DNA replication. This chain is DNA polymerase epsilon subunit C (DPB3), found in Yarrowia lipolytica (strain CLIB 122 / E 150) (Yeast).